A 264-amino-acid chain; its full sequence is MVKPLPRLRLQGFNNLTKALSFNIYDVCYARTEEERQRYIEYIDEQYDADRLTQILTDVAEIIGANILNIARQDYDPQGASVTILISEEPVIDKKQAGKELISDAVVAHMDKSHITVHTYPETHPQEGIATFRADIDVATCGVISPLKALNYLIESLESDIVIMDYRVRGFTRDVKGKKHYIDHKINSIQHFLAKNVKSRYEMFDVNVYQENIFHTKMHLKDFDLDQYLFEERAKNLSFKERMKIETLLKREIEELFHGRNLSE.

The Schiff-base intermediate with substrate; via pyruvic acid role is filled by S113. S113 carries the pyruvic acid (Ser); by autocatalysis modification. The Proton acceptor; for processing activity role is filled by H118. The Proton donor; for catalytic activity role is filled by C141.

Belongs to the prokaryotic AdoMetDC family. Type 2 subfamily. As to quaternary structure, heterooctamer of four alpha and four beta chains arranged as a tetramer of alpha/beta heterodimers. Pyruvate is required as a cofactor. Post-translationally, is synthesized initially as an inactive proenzyme. Formation of the active enzyme involves a self-maturation process in which the active site pyruvoyl group is generated from an internal serine residue via an autocatalytic post-translational modification. Two non-identical subunits are generated from the proenzyme in this reaction, and the pyruvate is formed at the N-terminus of the alpha chain, which is derived from the carboxyl end of the proenzyme. The post-translation cleavage follows an unusual pathway, termed non-hydrolytic serinolysis, in which the side chain hydroxyl group of the serine supplies its oxygen atom to form the C-terminus of the beta chain, while the remainder of the serine residue undergoes an oxidative deamination to produce ammonia and the pyruvoyl group blocking the N-terminus of the alpha chain.

The enzyme catalyses S-adenosyl-L-methionine + H(+) = S-adenosyl 3-(methylsulfanyl)propylamine + CO2. It functions in the pathway amine and polyamine biosynthesis; S-adenosylmethioninamine biosynthesis; S-adenosylmethioninamine from S-adenosyl-L-methionine: step 1/1. Its function is as follows. Catalyzes the decarboxylation of S-adenosylmethionine to S-adenosylmethioninamine (dcAdoMet), the propylamine donor required for the synthesis of the polyamines spermine and spermidine from the diamine putrescine. This chain is S-adenosylmethionine decarboxylase proenzyme, found in Xanthomonas campestris pv. campestris (strain B100).